A 287-amino-acid chain; its full sequence is 23S rRNA (uridine(2479)-2'-O)-methyltransferase (287 aa).

S-adenosyl-L-methionine contacts are provided by residues 210–211 (TD), glycine 232, and 252–254 (IPM).

The protein belongs to the class IV-like SAM-binding methyltransferase superfamily. RNA methyltransferase TsnR/AvirB family. Homodimer.

It catalyses the reaction uridine(2479) in 23S rRNA + S-adenosyl-L-methionine = 2'-O-methyluridine(2479) in 23S rRNA + S-adenosyl-L-homocysteine + H(+). Functionally, specifically methylates the 2'-O-ribose position of uridine-2479 in 23S ribosomal RNA. Confers resistance to antibiotic avilamycin, an orthosomycin antibiotic. The protein is 23S rRNA (uridine(2479)-2'-O)-methyltransferase (aviRb) of Streptomyces viridochromogenes.